We begin with the raw amino-acid sequence, 95 residues long: Co-chaperonin GroES (95 aa).

This sequence belongs to the GroES chaperonin family. In terms of assembly, heptamer of 7 subunits arranged in a ring. Interacts with the chaperonin GroEL.

It is found in the cytoplasm. In terms of biological role, together with the chaperonin GroEL, plays an essential role in assisting protein folding. The GroEL-GroES system forms a nano-cage that allows encapsulation of the non-native substrate proteins and provides a physical environment optimized to promote and accelerate protein folding. GroES binds to the apical surface of the GroEL ring, thereby capping the opening of the GroEL channel. The polypeptide is Co-chaperonin GroES (Streptococcus thermophilus (strain ATCC BAA-491 / LMD-9)).